A 359-amino-acid chain; its full sequence is UDP-N-acetylglucosamine--N-acetylmuramyl-(pentapeptide) pyrophosphoryl-undecaprenol N-acetylglucosamine transferase (359 aa).

UDP-N-acetyl-alpha-D-glucosamine contacts are provided by residues 13-15, N125, R161, S193, I241, and Q285; that span reads TAG.

It belongs to the glycosyltransferase 28 family. MurG subfamily.

The protein localises to the cell membrane. The catalysed reaction is di-trans,octa-cis-undecaprenyl diphospho-N-acetyl-alpha-D-muramoyl-L-alanyl-D-glutamyl-meso-2,6-diaminopimeloyl-D-alanyl-D-alanine + UDP-N-acetyl-alpha-D-glucosamine = di-trans,octa-cis-undecaprenyl diphospho-[N-acetyl-alpha-D-glucosaminyl-(1-&gt;4)]-N-acetyl-alpha-D-muramoyl-L-alanyl-D-glutamyl-meso-2,6-diaminopimeloyl-D-alanyl-D-alanine + UDP + H(+). It participates in cell wall biogenesis; peptidoglycan biosynthesis. Cell wall formation. Catalyzes the transfer of a GlcNAc subunit on undecaprenyl-pyrophosphoryl-MurNAc-pentapeptide (lipid intermediate I) to form undecaprenyl-pyrophosphoryl-MurNAc-(pentapeptide)GlcNAc (lipid intermediate II). This Corynebacterium diphtheriae (strain ATCC 700971 / NCTC 13129 / Biotype gravis) protein is UDP-N-acetylglucosamine--N-acetylmuramyl-(pentapeptide) pyrophosphoryl-undecaprenol N-acetylglucosamine transferase.